Here is a 216-residue protein sequence, read N- to C-terminus: 3-keto-L-gulonate-6-phosphate decarboxylase UlaD (216 aa).

Residue D11 participates in substrate binding. Residues E33 and D62 each contribute to the Mg(2+) site. Position 192 (R192) interacts with substrate.

The protein belongs to the HPS/KGPDC family. KGPDC subfamily. Homodimer. It depends on Mg(2+) as a cofactor.

The enzyme catalyses 3-dehydro-L-gulonate 6-phosphate + H(+) = L-xylulose 5-phosphate + CO2. The protein operates within cofactor degradation; L-ascorbate degradation; D-xylulose 5-phosphate from L-ascorbate: step 2/4. In terms of biological role, catalyzes the decarboxylation of 3-keto-L-gulonate-6-P into L-xylulose-5-P. Is involved in the anaerobic L-ascorbate utilization. This is 3-keto-L-gulonate-6-phosphate decarboxylase UlaD from Escherichia coli O127:H6 (strain E2348/69 / EPEC).